Here is a 506-residue protein sequence, read N- to C-terminus: MHRSDSTMWLKYGLSPPTRSPNAALCAAAATKCASMTRPSCVLDSLTLYSPAWPCLCRYAIFPCRAWAIYVRAGNFILTKFSRFSFCFCVWSPRPPIAAAANHPATSTIVARSQGLRGQDFNFLFVDEANFIKPGAMHTIMGFLNQTNCKLFFVSSTNTGQSSTSLLYNLKGSSNSLLNVVTYICDDHLPEVQQRQNVTTCSCYVLQKPVYVTMDHSVRNTAELFVKDSFMNEIAGGQVGNTLSARSVIASRAMDQFLVYRPSTSNSPNVHNLSRVLTAYIDPAFTANRSASGTGIALVTELNGATVLLGMEHFYLEALTGEAAAEIAQCANLCVAYTCLLHPGVFREVRVAVEGNSSQDSATAIALRLADLLAPLQKRLGFSLVFAHTRQHGSSVAHPFYLLNKQKSRAFDLFISRFNSGNIMASQELVSNTVLLGNDPCEYLVEQIKNLEIVITSGDANRVYSGKQGGKLADDVLVAVVMAAYLSFEGAPPAGYHTVSGAVCRR.

E128 (for ATPase activity) is an active-site residue. Active-site for nuclease activity residues include D282, E354, and D475.

It belongs to the herpesviridae TRM3 protein family. Interacts with the terminase subunits TRM1 and TRM2. Interacts with portal protein.

It is found in the host nucleus. Functionally, component of the molecular motor that translocates viral genomic DNA in empty capsid during DNA packaging. Forms a tripartite terminase complex together with TRM1 and TRM2 in the host cytoplasm. Once the complex reaches the host nucleus, it interacts with the capsid portal vertex. This portal forms a ring in which genomic DNA is translocated into the capsid. TRM3 carries an RNase H-like nuclease activity that plays an important role for the cleavage of concatemeric viral DNA into unit length genomes. This chain is Tripartite terminase subunit 3, found in Amazona oratrix (yellow-headed parrot).